Reading from the N-terminus, the 437-residue chain is 3-deoxy-D-manno-octulosonic acid transferase (437 aa).

A helical; Signal-anchor membrane pass occupies residues 16–36 (VVLVCAFVIALPKLLYKMLVY). Residue glutamate 70 is the Proton acceptor of the active site. CMP contacts are provided by residues 279–280 (PR), 319–321 (IGL), and 346–349 (NLLE).

It belongs to the glycosyltransferase group 1 family. Glycosyltransferase 30 subfamily.

The protein localises to the cell inner membrane. The catalysed reaction is lipid IVA (E. coli) + CMP-3-deoxy-beta-D-manno-octulosonate = alpha-Kdo-(2-&gt;6)-lipid IVA (E. coli) + CMP + H(+). It carries out the reaction alpha-Kdo-(2-&gt;6)-lipid IVA (E. coli) + CMP-3-deoxy-beta-D-manno-octulosonate = alpha-Kdo-(2-&gt;4)-alpha-Kdo-(2-&gt;6)-lipid IVA (E. coli) + CMP + H(+). The enzyme catalyses alpha-Kdo-(2-&gt;4)-alpha-Kdo-(2-&gt;6)-lipid IVA (E. coli) + CMP-3-deoxy-beta-D-manno-octulosonate = alpha-Kdo-(2-&gt;8)-alpha-Kdo-(2-&gt;4)-alpha-Kdo-(2-&gt;6)-lipid IVA (E. coli) + CMP + H(+). It participates in bacterial outer membrane biogenesis; LPS core biosynthesis. Involved in lipopolysaccharide (LPS) biosynthesis. Catalyzes the transfer of three 3-deoxy-D-manno-octulosonate (Kdo) residues from CMP-Kdo to lipid IV(A), the tetraacyldisaccharide-1,4'-bisphosphate precursor of lipid A. Thus generates the genus-specific LPS epitope of Chlamydia, composed of the trisaccharide alpha-Kdo-(2-&gt;8)-alpha-Kdo-(2-&gt;4)-alpha-Kdo. The polypeptide is 3-deoxy-D-manno-octulosonic acid transferase (waaA) (Chlamydia pneumoniae (Chlamydophila pneumoniae)).